Reading from the N-terminus, the 247-residue chain is MSVTMREMLEAGVHFGHQTRFWNPKMAPFIFGHRNKIHIINLEKTLPMYQDALKYVRQLAANRGTILFVGTKRQSREILAEEAARAGMPFVDSRWLGGMLTNFKTVKTSIKRLKDMEVAKEAGATETMSKKEALMFEREMDKLVKSIGGIKDMGGIPDAIFVVDVGYHKIAVTEAAKLGIPVIGVVDTNHSPEGIDYVIPGNDDSSKAVALYVRGVADAILEGRANAVQEVVEAARGGDDFVEVQEG.

Belongs to the universal ribosomal protein uS2 family.

The polypeptide is Small ribosomal subunit protein uS2 (Ralstonia pickettii (strain 12J)).